The following is a 366-amino-acid chain: Zinc finger protein ubi-d4 B (366 aa).

Disordered regions lie at residues 41–94 (ASAP…DGSS) and 140–167 (DDLDDEDYEEDTPKRRKGKSKGKGIGGA). Residues 76 to 86 (PDPEQMLKKEG) show a composition bias toward basic and acidic residues. Over residues 140-149 (DDLDDEDYEE) the composition is skewed to acidic residues. Residues 183 to 206 (YACDICGKRYKNRPGLSYHYAHSH) form a C2H2-type zinc finger. Positions 211–243 (EGAGAEDKEDSQPPTPIMHRSEEQKSKKGPDGL) are disordered. The segment covering 229 to 240 (HRSEEQKSKKGP) has biased composition (basic and acidic residues). 2 consecutive PHD-type zinc fingers follow at residues 247–307 (NNYC…CKCC) and 304–354 (CKCC…CLDL).

Belongs to the requiem/DPF family.

The protein localises to the cytoplasm. It is found in the nucleus. May be a transcription factor required for the apoptosis response following survival factor withdrawal from myeloid cells. Might also have a role in the development and maturation of lymphoid cells. The sequence is that of Zinc finger protein ubi-d4 B (req-b) from Xenopus laevis (African clawed frog).